A 564-amino-acid chain; its full sequence is Proline--tRNA ligase (564 aa).

Belongs to the class-II aminoacyl-tRNA synthetase family. ProS type 1 subfamily. As to quaternary structure, homodimer.

Its subcellular location is the cytoplasm. The enzyme catalyses tRNA(Pro) + L-proline + ATP = L-prolyl-tRNA(Pro) + AMP + diphosphate. Its function is as follows. Catalyzes the attachment of proline to tRNA(Pro) in a two-step reaction: proline is first activated by ATP to form Pro-AMP and then transferred to the acceptor end of tRNA(Pro). As ProRS can inadvertently accommodate and process non-cognate amino acids such as alanine and cysteine, to avoid such errors it has two additional distinct editing activities against alanine. One activity is designated as 'pretransfer' editing and involves the tRNA(Pro)-independent hydrolysis of activated Ala-AMP. The other activity is designated 'posttransfer' editing and involves deacylation of mischarged Ala-tRNA(Pro). The misacylated Cys-tRNA(Pro) is not edited by ProRS. In Xanthomonas axonopodis pv. citri (strain 306), this protein is Proline--tRNA ligase.